The primary structure comprises 237 residues: Mitochondrial inner membrane protease atp23 (237 aa).

Positions 1–18 are enriched in polar residues; it reads MSTSESSNNGSQPGNQDT. The disordered stretch occupies residues 1–24; sequence MSTSESSNNGSQPGNQDTGYIPGD. Residue His-136 participates in a divalent metal cation binding. Residue Glu-137 is part of the active site. His-140 contributes to the a divalent metal cation binding site.

This sequence belongs to the peptidase M76 family.

It localises to the mitochondrion inner membrane. Has a dual role in the assembly of mitochondrial ATPase. Acts as a protease that removes N-terminal residues of mitochondrial ATPase CF(0) subunit 6 at the intermembrane space side. Also involved in the correct assembly of the membrane-embedded ATPase CF(0) particle, probably mediating association of subunit 6 with the subunit 9 ring. This is Mitochondrial inner membrane protease atp23 (atp23) from Aspergillus niger (strain ATCC MYA-4892 / CBS 513.88 / FGSC A1513).